Consider the following 217-residue polypeptide: Thiosulfate dehydrogenase electron acceptor (217 aa).

A signal peptide spans 1 to 28 (MRQFIPMRRVLAVATLGALFWAAPASWA). Cytochrome c domains follow at residues 29-104 (AAPP…SKLK) and 116-206 (AAAA…AAQP). Heme c is bound by residues cysteine 37, cysteine 40, histidine 41, cysteine 137, cysteine 140, and histidine 141.

Binds 2 heme c groups covalently per subunit.

In terms of biological role, acts as an electron acceptor for the thiosulfate dehydrogenase TsdA. The chain is Thiosulfate dehydrogenase electron acceptor (tsdB) from Thiomonas intermedia (strain K12) (Thiobacillus intermedius).